A 500-amino-acid polypeptide reads, in one-letter code: Putative beta-glucosidase 5 (500 aa).

The signal sequence occupies residues 1 to 20 (MEQFFALFTIFLSFAFPGRC). A beta-D-glucoside-binding positions include Q43, H140, and 185 to 186 (NE). Catalysis depends on E186, which acts as the Proton donor. The cysteines at positions 205 and 212 are disulfide-linked. N-linked (GlcNAc...) asparagine glycosylation occurs at N216. Y328 provides a ligand contact to a beta-D-glucoside. Residue N361 is glycosylated (N-linked (GlcNAc...) asparagine). E394 serves as a coordination point for a beta-D-glucoside. The active-site Nucleophile is the E394. N424 carries an N-linked (GlcNAc...) asparagine glycan. A beta-D-glucoside is bound by residues W434 and Y450. N456 and N495 each carry an N-linked (GlcNAc...) asparagine glycan.

This sequence belongs to the glycosyl hydrolase 1 family.

The enzyme catalyses Hydrolysis of terminal, non-reducing beta-D-glucosyl residues with release of beta-D-glucose.. The protein is Putative beta-glucosidase 5 of Arabidopsis thaliana (Mouse-ear cress).